We begin with the raw amino-acid sequence, 271 residues long: MAACTMSVCSSACSDSWRVDDCPESCCEPPCGTAPCLTLVCTPVSCVSSPCCQAACEPSPCQSGCTSSCTPSCCQPACCASSPCQQACCVPVCCKPVCCLPTCSKDSSSCCQQSSCQPTCCASSSCQQSCCVPVCCKPVCCVPTCSEDSSSCCQHSSCQPTCCTSSPCQQSCYVPVCCKPVCCKPICCVPVCSGASTSCCQQSSCQPACCTTSCCRPSSSVSLLCRPICRPACCLPISSCCAPASSYQASCCRPASCVSLLCRPACSPLAC.

Repeat copies occupy residues 26 to 30 (CCEPP), 51 to 55 (CCQAA), 73 to 77 (CCQPA), 78 to 82 (CCASS), 88 to 92 (CCVPV), 93 to 97 (CCKPV), 98 to 102 (CCLPT), 110 to 114 (CCQQS), 120 to 124 (CCASS), 130 to 134 (CCVPV), 135 to 139 (CCKPV), 140 to 144 (CCVPT), 152 to 156 (CCQHS), 162 to 166 (CCTSS), 177 to 181 (CCKPV), 187 to 191 (CCVPV), 199 to 203 (CCQQS), 209 to 213 (CCTTS), 214 to 218 (CCRPS), 233 to 237 (CCLPI), 240 to 244 (CCAPA), and 251 to 255 (CCRPA). A 22 X 5 AA repeats of C-C-X(3) region spans residues 26 to 255 (CCEPPCGTAP…SYQASCCRPA (230 aa)).

Belongs to the KRTAP type 10 family. In terms of assembly, interacts with hair keratins. Restricted to a narrow region of the hair fiber cuticle, lying approximately 20 cell layers above the apex of the dermal papilla of the hair root; not detected in any other tissues.

Its function is as follows. In the hair cortex, hair keratin intermediate filaments are embedded in an interfilamentous matrix, consisting of hair keratin-associated proteins (KRTAP), which are essential for the formation of a rigid and resistant hair shaft through their extensive disulfide bond cross-linking with abundant cysteine residues of hair keratins. The matrix proteins include the high-sulfur and high-glycine-tyrosine keratins. This is Keratin-associated protein 10-5 (KRTAP10-5) from Homo sapiens (Human).